A 774-amino-acid polypeptide reads, in one-letter code: Beta-xylosidase/alpha-L-arabinofuranosidase 2 (774 aa).

The signal sequence occupies residues 1-33 (MASVENRTPNVSVFLCFFVLFATLLLSGGRVSS). The N-linked (GlcNAc...) asparagine glycan is linked to asparagine 136. The active site involves aspartate 303. N-linked (GlcNAc...) asparagine glycosylation occurs at asparagine 437.

It belongs to the glycoside hydrolase 3 family.

It is found in the secreted. The protein resides in the extracellular space. The protein localises to the extracellular matrix. The enzyme catalyses Hydrolysis of (1-&gt;4)-beta-D-xylans, to remove successive D-xylose residues from the non-reducing termini.. It carries out the reaction Hydrolysis of terminal non-reducing alpha-L-arabinofuranoside residues in alpha-L-arabinosides.. In terms of biological role, a bifunctional beta-xylosidase/alpha-L-arabinosidase, exo-enzyme that acts synergistically with endohydrolases. Releases xylose and arabinose from cell walls. The protein is Beta-xylosidase/alpha-L-arabinofuranosidase 2 of Medicago sativa subsp. varia (Alfalfa).